A 324-amino-acid chain; its full sequence is Glyoxylate/hydroxypyruvate reductase B (324 aa).

Residues Arg-237 and Glu-266 contribute to the active site. Residue His-285 is the Proton donor of the active site.

The protein belongs to the D-isomer specific 2-hydroxyacid dehydrogenase family. GhrB subfamily. Homodimer.

The protein localises to the cytoplasm. The catalysed reaction is glycolate + NADP(+) = glyoxylate + NADPH + H(+). It carries out the reaction (R)-glycerate + NAD(+) = 3-hydroxypyruvate + NADH + H(+). It catalyses the reaction (R)-glycerate + NADP(+) = 3-hydroxypyruvate + NADPH + H(+). Its function is as follows. Catalyzes the NADPH-dependent reduction of glyoxylate and hydroxypyruvate into glycolate and glycerate, respectively. This Escherichia coli O6:H1 (strain CFT073 / ATCC 700928 / UPEC) protein is Glyoxylate/hydroxypyruvate reductase B.